The chain runs to 683 residues: Dixin (683 aa).

A lipid anchor (N-myristoyl glycine) is attached at L2. One can recognise a Calponin-homology (CH) domain in the interval 20–127 (EQQLQAYVAW…LVLALAAHFK (108 aa)). The actin-binding stretch occupies residues 127-300 (KPGSSRTVNQ…LEKEMEEAKK (174 aa)). S186 bears the Phosphoserine mark. Positions 207 to 235 (GQQRSPSESSCSSLTSPSPIHSAKSESII) are disordered. Low complexity predominate over residues 211-228 (SPSESSCSSLTSPSPIHS). A Phosphoserine modification is found at S231. Positions 279–452 (SWEEQLLEQQ…EALRKLSDVS (174 aa)) form a coiled coil. Residues 482-492 (NYNSHNSQSNG) show a composition bias toward polar residues. Disordered regions lie at residues 482 to 509 (NYNS…SNRG) and 556 to 594 (TQKK…QSSP). At S590 the chain carries Phosphoserine. One can recognise a DIX domain in the interval 600–680 (CTKVLYFTDR…KIVAWVEEDH (81 aa)).

The protein belongs to the DIXDC1 family. As to quaternary structure, isoform 1 but not isoform 2 binds filamentous actin. Interacts with the complex composed of DVL2 and Rac. Interacts with AXIN1; competes with MAP3K1. Interacts with MAP3K4 preventing MAP3K4 interaction with AXIN1. Directly interacts (via DIX domain) with DVL2 (via DIX domain). Interacts with gamma-tubulin. Phosphorylated on tyrosine and serine residues. In terms of processing, polyubiquitinated, leading to its proteasomal degradation. WNT3A signaling increases DIXDC1 protein levels by inhibiting its ubiquitination and subsequent degradation. In terms of tissue distribution, ubiquitously expressed with higher expression in cardiac and skeletal muscles.

It localises to the cell junction. It is found in the focal adhesion. The protein localises to the cytoplasm. The protein resides in the cytoskeleton. Its subcellular location is the stress fiber. Positive effector of the Wnt signaling pathway; activates WNT3A signaling via DVL2. Regulates JNK activation by AXIN1 and DVL2. This Homo sapiens (Human) protein is Dixin (DIXDC1).